The sequence spans 606 residues: MAAAGLDTLRLEDSDDDFKYEEVDVMSDGEDDASEDLDAALRKLQQFTSKQEAATGPARTTEVKPGQVVKKPEVIDDFLRNFFIKMGLSRTCECFEAEWYELKATGRLDNSTTVPDVYLRNAELEDDVAGLRRELAEAKSIAGRASATWDKFRKERDFHRMHHKRVAQEKNKLLTDLRRLKEHYAKYEPTILELKKKYETLMKEKMMMSLERDKLAARVDALEQVASSPLPGAERSLGGQSTAAAGGGASGRALGATNRALTGDVPPAAGAAAAAATGRSGAVSAGPRSGWASLNAPPRRNPYADLEFPAAPVKMLSLNKTFKGHLLSVANLALHPTKPILVTASDDKTWKMWHMPGGDLIMCGEGHKDWVAGVDFHPAGTCLASGGGDSAVKIWDFEKQRCVTTFTDHKQAIWSVRFHHLGEVVASGSLDHTVRLWDLPAGKCRMALRGHVDSVNDLAWQPFSSSLATASSDKTVSVWDARAGLCTQTYYGHQNSCNGVSFNILGTQLASTDADGVVKLWDTRMTAEVATINTGKHPANKSCFDRSGQVLAVACDDGKVKAYSTTDGVLQAELAGHEDAVQAVLFDPAGQYLVSCGSDNTFRLWS.

The interval 229–250 (PLPGAERSLGGQSTAAAGGGAS) is disordered. WD repeat units follow at residues 324 to 354 (GHLLSVANLALHPTKPILVTASDDKTWKMWH), 366 to 396 (GHKDWVAGVDFHPAGTCLASGGGDSAVKIWD), 408 to 438 (DHKQAIWSVRFHHLGEVVASGSLDHTVRLWD), 450 to 480 (GHVDSVNDLAWQPFSSSLATASSDKTVSVWD), 492 to 522 (GHQNSCNGVSFNILGTQLASTDADGVVKLWD), 534 to 564 (TGKHPANKSCFDRSGQVLAVACDDGKVKAYS), and 576 to 606 (GHEDAVQAVLFDPAGQYLVSCGSDNTFRLWS).

Inter-microtubule bridges in flagella.

It localises to the cell projection. Its subcellular location is the cilium. It is found in the flagellum. This chain is Flagellar WD repeat-containing protein Pf20 (PF20), found in Chlamydomonas reinhardtii (Chlamydomonas smithii).